Here is a 718-residue protein sequence, read N- to C-terminus: D-(-)-3-hydroxybutyrate oligomer hydrolase (718 aa).

S320 functions as the Charge relay system in the catalytic mechanism.

It belongs to the D-(-)-3-hydroxybutyrate oligomer hydrolase family.

It is found in the cytoplasm. The catalysed reaction is (3R)-hydroxybutanoate dimer + H2O = 2 (R)-3-hydroxybutanoate + H(+). Its pathway is lipid metabolism; butanoate metabolism. Its activity is regulated as follows. Inhibited by diisopropylfluorophosphate (DFP). Functionally, participates in the degradation of poly-3-hydroxybutyrate (PHB). It works downstream of poly(3-hydroxybutyrate) depolymerase, hydrolyzing D(-)-3-hydroxybutyrate oligomers of various length (3HB-oligomers) into 3HB-monomers. Seems to have also poly(3-hydroxybutyrate) depolymerase activity since it is able to release 3HB-monomers from artificial amorphous PHB. The protein is D-(-)-3-hydroxybutyrate oligomer hydrolase (phaZ2) of Cupriavidus necator (strain ATCC 17699 / DSM 428 / KCTC 22496 / NCIMB 10442 / H16 / Stanier 337) (Ralstonia eutropha).